The chain runs to 6359 residues: Bacitracin synthase 3 (6359 aa).

Positions 461 to 1034 (LHELFEEQAM…IKGLGEYIRS (574 aa)) are domain 1 (isoleucine-activating). A compositionally biased stretch (basic and acidic residues) spans 941–953 (VDRKALPEPDRTA). Residues 941–962 (VDRKALPEPDRTAGAENEYEAP) form a disordered region. Carrier domains follow at residues 961-1036 (APRN…RSTK), 1993-2067 (APRN…KKQS), 3497-3572 (APRN…ESMK), 4539-4613 (PPRN…KAES), and 6047-6122 (PPRH…KHAQ). An O-(pantetheine 4'-phosphoryl)serine mark is found at S996, S2028, and S3532. The interval 1517 to 2064 (FEDQTLTYRQ…RIKDLAKYVK (548 aa)) is domain 2 (D-phenylalanine-activating). Residues 2999-3570 (NKTIHQLFEE…IKDIGDFIES (572 aa)) are domain 3 (histidine-activating). Residues 4047 to 4612 (EQTAVVYADE…KSLSRYVKAE (566 aa)) are domain 4 (D-aspartic acid-activating). Residues 4521–4544 (IDTAALPEPQPGKETEYEPPRNET) are disordered. Positions 4531-4544 (PGKETEYEPPRNET) are enriched in basic and acidic residues. An O-(pantetheine 4'-phosphoryl)serine mark is found at S4574 and S6082. Residues 5549-6129 (IHRLFEEQAE…HAQDLLKDYT (581 aa)) are domain 5 (asparagine-activating).

Belongs to the ATP-dependent AMP-binding enzyme family. Large multienzyme complex of BA1, BA2 and BA3. The cofactor is pantetheine 4'-phosphate.

The catalysed reaction is L-aspartate = D-aspartate. The enzyme catalyses L-phenylalanine + ATP + H2O = D-phenylalanine + AMP + diphosphate + H(+). It functions in the pathway antibiotic biosynthesis; bacitracin biosynthesis. In terms of biological role, induces peptide synthesis, activates and incorporates five amino acids, forms a thiazoline ring between the first two amino acids and incorporates a D-glutamine in the fourth position. In Bacillus licheniformis, this protein is Bacitracin synthase 3 (bacC).